The sequence spans 305 residues: Transmembrane protein 74 (305 aa).

Ser-11 carries the phosphoserine modification. Positions 122 to 132 are enriched in polar residues; it reads QRSQRSPSAKG. Residues 122-143 are disordered; it reads QRSQRSPSAKGSNHPVDLGWGN. The next 2 membrane-spanning stretches (helical) occupy residues 178–198 and 232–252; these read FISA…SYIV and VIAG…LLMM.

It belongs to the TMEM74 family.

Its subcellular location is the lysosome membrane. The protein localises to the cytoplasmic vesicle. It localises to the autophagosome membrane. In terms of biological role, plays an essential role in autophagy. TMEM74-induced autophagy may involve PI3K signal transduction. In Mus musculus (Mouse), this protein is Transmembrane protein 74 (Tmem74).